We begin with the raw amino-acid sequence, 263 residues long: Trans-2-decenoyl-[acyl-carrier-protein] isomerase (263 aa).

It belongs to the enoyl-CoA hydratase/isomerase family. In terms of assembly, homotetramer.

The enzyme catalyses (2E)-decenoyl-[ACP] = (3Z)-decenoyl-[ACP]. It participates in lipid metabolism; fatty acid biosynthesis. Functionally, catalyzes the isomerization of trans-2-decenoyl-ACP to cis-3-decenoyl-ACP. Required for survival at low pH. The polypeptide is Trans-2-decenoyl-[acyl-carrier-protein] isomerase (fabM) (Streptococcus mutans serotype c (strain ATCC 700610 / UA159)).